The following is a 372-amino-acid chain: Putative aminopeptidase SgcX (372 aa).

His-67 and Asp-180 together coordinate a divalent metal cation. Catalysis depends on Glu-212, which acts as the Proton acceptor. The a divalent metal cation site is built by Glu-213, Asp-235, and His-329.

This sequence belongs to the peptidase M42 family. A divalent metal cation is required as a cofactor.

This Salmonella typhimurium (strain LT2 / SGSC1412 / ATCC 700720) protein is Putative aminopeptidase SgcX (sgcX).